The following is a 725-amino-acid chain: FYVE, RhoGEF and PH domain-containing protein 3 (725 aa).

The interval 1–151 (MESGRGSSTP…KADKDAGLAQ (151 aa)) is disordered. Over residues 124 to 136 (EEADSDVGEEPDS) the composition is skewed to acidic residues. S128 carries the phosphoserine modification. In terms of domain architecture, DH spans 157–341 (KLLHIAQELL…STAANHSNAA (185 aa)). The PH 1 domain maps to 370–469 (ELIKEGQIQK…WIQIIQATIE (100 aa)). The interval 487–532 (QDEDPSLSPDMPITSTSPVEPVVTTEGSSGAAGLEPRKLSSKTRRD) is disordered. The span at 500–512 (TSTSPVEPVVTTE) shows a compositional bias: low complexity. A compositionally biased stretch (basic and acidic residues) spans 521 to 532 (EPRKLSSKTRRD). The segment at 532–588 (DKEKQSCKSCGETFNSITKRRHHCKLCGAVICGKCSEFKAENSRQSRVCRDCFLTQP) adopts an FYVE-type zinc-finger fold. Residues C538, C541, C555, C558, C563, C566, C580, and C583 each coordinate Zn(2+). Residues 604–703 (PSLLCGPLRL…WLETLSTAAH (100 aa)) enclose the PH 2 domain. The disordered stretch occupies residues 703–725 (HGDTAQDSPGALQLQVPMGAAAP).

It is found in the cytoplasm. The protein localises to the cytoskeleton. In terms of biological role, promotes the formation of filopodia. May activate CDC42, a member of the Ras-like family of Rho- and Rac proteins, by exchanging bound GDP for free GTP. Plays a role in regulating the actin cytoskeleton and cell shape. In Homo sapiens (Human), this protein is FYVE, RhoGEF and PH domain-containing protein 3 (FGD3).